Reading from the N-terminus, the 969-residue chain is Isoleucine--tRNA ligase (969 aa).

The 'HIGH' region signature appears at 68 to 78 (PYANGNLHMGH). An L-isoleucyl-5'-AMP-binding site is contributed by E584. Positions 625-629 (KMSKS) match the 'KMSKS' region motif. An ATP-binding site is contributed by K628. C938, C941, C958, and C961 together coordinate Zn(2+).

Belongs to the class-I aminoacyl-tRNA synthetase family. IleS type 1 subfamily. In terms of assembly, monomer. Zn(2+) serves as cofactor.

The protein localises to the cytoplasm. It catalyses the reaction tRNA(Ile) + L-isoleucine + ATP = L-isoleucyl-tRNA(Ile) + AMP + diphosphate. Its function is as follows. Catalyzes the attachment of isoleucine to tRNA(Ile). As IleRS can inadvertently accommodate and process structurally similar amino acids such as valine, to avoid such errors it has two additional distinct tRNA(Ile)-dependent editing activities. One activity is designated as 'pretransfer' editing and involves the hydrolysis of activated Val-AMP. The other activity is designated 'posttransfer' editing and involves deacylation of mischarged Val-tRNA(Ile). This chain is Isoleucine--tRNA ligase, found in Prochlorococcus marinus (strain SARG / CCMP1375 / SS120).